The primary structure comprises 206 residues: Methyltransferase-like 26 (206 aa).

This sequence belongs to the UPF0585 family.

The protein is Methyltransferase-like 26 of Danio rerio (Zebrafish).